We begin with the raw amino-acid sequence, 313 residues long: tRNA-cytidine(32) 2-sulfurtransferase (313 aa).

The short motif at 54-59 (SGGKDS) is the PP-loop motif element. [4Fe-4S] cluster is bound by residues cysteine 129, cysteine 132, and cysteine 220.

Belongs to the TtcA family. As to quaternary structure, homodimer. Mg(2+) serves as cofactor. Requires [4Fe-4S] cluster as cofactor.

The protein resides in the cytoplasm. The enzyme catalyses cytidine(32) in tRNA + S-sulfanyl-L-cysteinyl-[cysteine desulfurase] + AH2 + ATP = 2-thiocytidine(32) in tRNA + L-cysteinyl-[cysteine desulfurase] + A + AMP + diphosphate + H(+). The protein operates within tRNA modification. Its function is as follows. Catalyzes the ATP-dependent 2-thiolation of cytidine in position 32 of tRNA, to form 2-thiocytidine (s(2)C32). The sulfur atoms are provided by the cysteine/cysteine desulfurase (IscS) system. This Methylibium petroleiphilum (strain ATCC BAA-1232 / LMG 22953 / PM1) protein is tRNA-cytidine(32) 2-sulfurtransferase.